Reading from the N-terminus, the 121-residue chain is Large ribosomal subunit protein bL12 (121 aa).

It belongs to the bacterial ribosomal protein bL12 family. In terms of assembly, homodimer. Part of the ribosomal stalk of the 50S ribosomal subunit. Forms a multimeric L10(L12)X complex, where L10 forms an elongated spine to which 2 to 4 L12 dimers bind in a sequential fashion. Binds GTP-bound translation factors.

Forms part of the ribosomal stalk which helps the ribosome interact with GTP-bound translation factors. Is thus essential for accurate translation. This chain is Large ribosomal subunit protein bL12, found in Shewanella baltica (strain OS185).